The following is a 131-amino-acid chain: Small ribosomal subunit protein uS8 (131 aa).

This sequence belongs to the universal ribosomal protein uS8 family. In terms of assembly, part of the 30S ribosomal subunit. Contacts proteins S5 and S12.

One of the primary rRNA binding proteins, it binds directly to 16S rRNA central domain where it helps coordinate assembly of the platform of the 30S subunit. The polypeptide is Small ribosomal subunit protein uS8 (Shewanella amazonensis (strain ATCC BAA-1098 / SB2B)).